The chain runs to 975 residues: NLR family member X1 (975 aa).

Residues 1 to 86 (MRWGHHLPRA…EAIQRHRRNL (86 aa)) constitute a mitochondrion transit peptide. Residues 75–556 (ATEAIQRHRR…RALPLLFNLI (482 aa)) are required for interaction with MAVS. An NACHT domain is found at 160–483 (QTVVLYGTVG…LRFFLAPCVE (324 aa)). 166-173 (GTVGTGKS) provides a ligand contact to ATP. The segment at 556-974 (IKVVPRVFGR…ALLEQLGSSG (419 aa)) is required for the repression of MAVS-induced interferon signaling. The LRRNT domain occupies 667–694 (RQVLPPSELLDHLFFHYEFQNQRFSAEV). LRR repeat units lie at residues 695 to 718 (LSSLRQLNLAGVRMTPVKCTVVAA), 724 to 747 (RHALDEVNLASCQLDPAGLRTLLP), 749 to 777 (FLRARKLGLQLNSLGPEACKDLRDLLLHD), 778 to 801 (QCQITTLRLSNNPLTAAGVAVLME), 811 to 834 (HLSLLHTGLGDEGLELLAAQLDRN), 835 to 857 (RQLQELNVAYNGAGDTAALALAR), 858 to 877 (AAREHPSLELLHLYFNELSS), and 878 to 899 (EGRQVLRDLGGAAEGGARVVVS). The 65-residue stretch at 906–970 (VSEYWSVILS…GEVRALLEQL (65 aa)) folds into the LRRCT domain.

The protein belongs to the NLRP family. In terms of assembly, homohexamer. Interacts with MAVS. Interacts with TUFM. (Microbial infection) Interacts with influenza A virus protein PB1-F2. As to expression, ubiquitously expressed. Strongest expression in mammary gland, heart and muscle. Detected in HeLa, HEK293T, THP-1, HL-60, Raji and Jurkat cell lines (at protein level).

The protein resides in the mitochondrion outer membrane. Functionally, participates in antiviral signaling. Acts as a negative regulator of MAVS-mediated antiviral responses, through the inhibition of the virus-induced RLH (RIG-like helicase)-MAVS interaction. Instead, promotes autophagy by interacting with TUFM and subsequently recruiting the autophagy-related proteins ATG5 and ATG12. Also regulates MAVS-dependent NLRP3 inflammasome activation to attenuate apoptosis. Has no inhibitory function on NF-kappa-B signaling pathway, but enhances NF-kappa-B and JUN N-terminal kinase dependent signaling through the production of reactive oxygen species. Regulates viral mediated-inflammation and energy metabolism in a sex-dependent manner. In females, prevents uncontrolled inflammation and energy metabolism and thus, may contribute to the sex differences observed in infectious and inflammatory diseases. In Homo sapiens (Human), this protein is NLR family member X1 (NLRX1).